Reading from the N-terminus, the 192-residue chain is Protein A16 (192 aa).

The first 22 residues, 1–22, serve as a signal peptide directing secretion; it reads MLLANTAAAVLLLIVCIGASVG. Positions 71-186 constitute a C-type lectin domain; that stretch reads KNKKFTIGTL…CLNPLNIFPY (116 aa). The cysteines at positions 163 and 177 are disulfide-linked.

Expressed in the gut of adults.

This chain is Protein A16 (CTL3), found in Anopheles gambiae (African malaria mosquito).